A 1189-amino-acid chain; its full sequence is Zinc finger CCCH domain-containing protein 6 (1189 aa).

Over residues 1–12 the composition is skewed to basic and acidic residues; that stretch reads MTDSEHAGHDRE. A disordered region spans residues 1–105; sequence MTDSEHAGHD…HKKRTGFYRD (105 aa). A compositionally biased stretch (acidic residues) spans 13–28; that stretch reads DGELEDGEIDDAGFEE. Residues 27 to 73 are a coiled coil; sequence EEIQEKEAKENEKQKSEKAYRKSRKKHKKEREKKKSKRRKREKHKHN. The segment covering 29–46 has biased composition (basic and acidic residues); it reads IQEKEAKENEKQKSEKAY. Residues 47–73 are compositionally biased toward basic residues; the sequence is RKSRKKHKKEREKKKSKRRKREKHKHN. C3H1-type zinc fingers lie at residues 273–299, 301–328, and 329–352; these read KGKQ…HDAE, EKRK…HNEF, and PCKF…HDDL. A coiled-coil region spans residues 353-385; it reads TKETKKLLDKVLNTDEELINEDERELEELRKRG. Disordered regions lie at residues 451-530, 630-659, 676-755, 947-1026, and 1051-1189; these read FYTS…GPQN, PPVV…PVPG, YQED…GNQV, LEQF…PYAP, and PRDH…SPFC. A compositionally biased stretch (low complexity) spans 461-478; it reads QFQGSSPHPQHIYSSGSS. The span at 505–525 shows a compositional bias: pro residues; the sequence is AGPPGLPVPQSPPLPPGPPEI. A compositionally biased stretch (low complexity) spans 639–659; sequence HGSGSDGSSTRTGHGPLPVPG. Residues 718-741 are compositionally biased toward polar residues; sequence KTLQKQTETLRNQQQPSTELSTPT. The span at 961-973 shows a compositional bias: basic and acidic residues; the sequence is GDPRLQKNFDPRL. Composition is skewed to low complexity over residues 1009–1020 and 1056–1069; these read SGAGTSNSGSGA and SSST…SSGE. Position 1158 is a phosphoserine (serine 1158). Over residues 1164–1179 the composition is skewed to basic and acidic residues; the sequence is DPGRETDDKSLKEVFK.

This chain is Zinc finger CCCH domain-containing protein 6 (ZC3H6), found in Homo sapiens (Human).